We begin with the raw amino-acid sequence, 339 residues long: Cathepsin L (339 aa).

The N-terminal stretch at Met-1–Ala-17 is a signal peptide. Residues Ile-18–Thr-121 constitute a propeptide, activation peptide. Asn-96 carries an N-linked (GlcNAc...) asparagine glycan. 3 cysteine pairs are disulfide-bonded: Cys-143–Cys-186, Cys-177–Cys-219, and Cys-278–Cys-328. The active site involves Cys-146. His-285 is an active-site residue. Positions Asp-295–Gly-298 are excised as a propeptide. Asn-306 is an active-site residue.

This sequence belongs to the peptidase C1 family. As to quaternary structure, dimer of a heavy and a light chain linked by disulfide bonds.

The protein resides in the lysosome. The catalysed reaction is Specificity close to that of papain. As compared to cathepsin B, cathepsin L exhibits higher activity toward protein substrates, but has little activity on Z-Arg-Arg-NHMec, and no peptidyl-dipeptidase activity.. Functionally, important for the overall degradation of proteins in lysosomes. Required for differentiation of imaginal disks. The polypeptide is Cathepsin L (Sarcophaga peregrina (Flesh fly)).